The primary structure comprises 3122 residues: tRNA nuclease CdiA-2 (3122 aa).

The tract at residues 36-205 (RAGVVPAWLS…ATLTTGNPNF (170 aa)) is two-partner system transport domain (TPS). The chain crosses the membrane as a helical span at residues 54–74 (VALAVLVAAGVVPIWVNAQVV). Residues 256-1254 (VVAGSNQVDY…GGSVAIQASG (999 aa)) are FHA-1. Residues 492-512 (GMTLGGGSLSNQGGRANSQGP) form a disordered region. A compositionally biased stretch (polar residues) spans 500–512 (LSNQGGRANSQGP). Positions 1345-1635 (TRRVMQTSGN…SATAVNVLSN (291 aa)) are receptor binding domain (RBD). Residues 1790–1845 (TAGNIDLKNTQVFTNSGTVKADTTLALQGKQIDNAFGALQSGGLTSLDTTGNVDLT) are periplasmic FHA-1 repeat (pFR). Residues 1947–2085 (SDTDLNSATG…TERHVYNSRE (139 aa)) are FHA-2. Disordered regions lie at residues 2002-2031 (TSTI…ALTG), 2151-2174 (TTSQ…MSGG), and 2325-2352 (IGVQ…GSSI). Residues 2086-2825 (THSRSGVVSG…SAGAAMASNV (740 aa)) are pretoxin (PT) domain. Low complexity-rich tracts occupy residues 2151 to 2170 (TTSQ…HSGL) and 2325 to 2341 (IGVQ…MQSS). Residues 2342–2352 (EDQTIQRGSSI) show a composition bias toward polar residues. The segment at 2821–3122 (MASNVELYNA…NITIIKPKGN (302 aa)) is C-terminal effector domain (CT), has tRNA nuclease activity. The ELYN C-terminal motif signature appears at 2826–2829 (ELYN). The segment at 2948 to 3000 (GATDRTPPSNAILSNSNSDNNSTQGSQSGTVTKTPNPEATGSLSGKPTQIPPL) is disordered. A truncated CT domain, has tRNA nuclease activity, sufficient for interaction with CdiI-2 region spans residues 2948–3122 (GATDRTPPSN…NITIIKPKGN (175 aa)). The segment covering 2953 to 2994 (TPPSNAILSNSNSDNNSTQGSQSGTVTKTPNPEATGSLSGKP) has biased composition (polar residues). Positions 2987-3122 (TGSLSGKPTQ…NITIIKPKGN (136 aa)) are has tRNase activity. Active-site residues include E3012, D3039, D3048, and K3067.

It in the N-terminal section; belongs to the CdiA toxin family. Interacts with cognate immunity protein CdiI, which blocks its tRNA nuclease activity. The truncated CT fragment (residues 2948-3122) specifically interacts with cognate CdiI which inhibits the tRNA nuclease activity. The truncated CT is more stable in vitro than the original CT fragment characterized in E.coli.

The protein localises to the membrane. The protein resides in the secreted. Its subcellular location is the target cell. It localises to the target cell cytoplasm. Toxic component of a toxin-immunity protein module, which functions as a cellular contact-dependent growth inhibition (CDI) system. CDI modules allow bacteria to communicate with and inhibit the growth of closely related neighboring bacteria in a contact-dependent fashion. The C-terminal 301 residues (the CT fragment) cleaves near the C-terminus of E.coli tRNA1B(Ala), probably preventing tRNA charging, and inhibits growth in E.coli. A truncated CT fragment (residues 2948-3122) has tRNA endonuclease activity on several B.thailandensis tRNAs as well as tRNA2(Arg) where it cleaves after A-70 and U-71. Inactive CT domain binds tRNA, probably in a 1:1 complex. Toxic activity is neutralized by coexpression of the cognate immunity protein CdiI in E.coli, but not by non-cognate immunity proteins from other strains of B.pseudomallei. May use lipopolysaccharide as its target cell receptor. Probably gains access to the cytoplasm of target cells (B.thailandensis strain E264) by using integral inner membrane protein BTH_II0599. Protein BTH_I0359 is also implicated in an unknown fashion in CDI in B.thailandensis strain E264. Its function is as follows. Expression of this cdiAIB locus in B.thailandensis confers protection against other bacteria carrying the locus; growth inhibition requires cellular contact. Functionally, the CdiA protein is thought to be exported from the cell through the central lumen of CdiB, the other half of its two-partner system (TPS). The TPS domain probably remains associated with CdiB while the FHA-1 domain forms an extended filament with the receptor-binding domain (RBD) at its extremity; in the secretion arrested state the C-terminus of the RBD domain form a hairpin-like structure as the FHA-2, PT and CT domains are periplasmic. Upon binding to a target cell outer membrane receptor (possibly a lipoprotein in this CDI) a signal is transmitted to activate secretion. The filament elongates slightly, the rest of CdiA is secreted and the FHA-2 domain becomes stably associated with the target cell's outer membrane where it facilitates entry of the toxic CT domain into the target cell periplasm. From there the toxic CT domain is cleaved and gains access to the target cell cytoplasm via an inner membrane protein (probably inner membrane protein BTH_II0599). The protein is tRNA nuclease CdiA-2 (cdiA2) of Burkholderia pseudomallei (strain 1026b).